A 334-amino-acid polypeptide reads, in one-letter code: Holliday junction branch migration complex subunit RuvB (334 aa).

The interval 4–184 is large ATPase domain (RuvB-L); that stretch reads ADRLIQPQIQ…FGIPLRLEFY (181 aa). ATP is bound by residues arginine 24, glycine 65, lysine 68, threonine 69, threonine 70, 131 to 133, arginine 174, tyrosine 184, and arginine 221; that span reads EDY. Threonine 69 lines the Mg(2+) pocket. The tract at residues 185-255 is small ATPAse domain (RuvB-S); sequence NIKDLSTIVT…VAEHALDLLD (71 aa). A head domain (RuvB-H) region spans residues 258-334; it reads SEGFDYMDRK…YQHFELIKPE (77 aa). Residues arginine 294, arginine 313, and arginine 318 each coordinate DNA.

This sequence belongs to the RuvB family. Homohexamer. Forms an RuvA(8)-RuvB(12)-Holliday junction (HJ) complex. HJ DNA is sandwiched between 2 RuvA tetramers; dsDNA enters through RuvA and exits via RuvB. An RuvB hexamer assembles on each DNA strand where it exits the tetramer. Each RuvB hexamer is contacted by two RuvA subunits (via domain III) on 2 adjacent RuvB subunits; this complex drives branch migration. In the full resolvosome a probable DNA-RuvA(4)-RuvB(12)-RuvC(2) complex forms which resolves the HJ.

The protein resides in the cytoplasm. The catalysed reaction is ATP + H2O = ADP + phosphate + H(+). The RuvA-RuvB-RuvC complex processes Holliday junction (HJ) DNA during genetic recombination and DNA repair, while the RuvA-RuvB complex plays an important role in the rescue of blocked DNA replication forks via replication fork reversal (RFR). RuvA specifically binds to HJ cruciform DNA, conferring on it an open structure. The RuvB hexamer acts as an ATP-dependent pump, pulling dsDNA into and through the RuvAB complex. RuvB forms 2 homohexamers on either side of HJ DNA bound by 1 or 2 RuvA tetramers; 4 subunits per hexamer contact DNA at a time. Coordinated motions by a converter formed by DNA-disengaged RuvB subunits stimulates ATP hydrolysis and nucleotide exchange. Immobilization of the converter enables RuvB to convert the ATP-contained energy into a lever motion, pulling 2 nucleotides of DNA out of the RuvA tetramer per ATP hydrolyzed, thus driving DNA branch migration. The RuvB motors rotate together with the DNA substrate, which together with the progressing nucleotide cycle form the mechanistic basis for DNA recombination by continuous HJ branch migration. Branch migration allows RuvC to scan DNA until it finds its consensus sequence, where it cleaves and resolves cruciform DNA. In Shewanella baltica (strain OS155 / ATCC BAA-1091), this protein is Holliday junction branch migration complex subunit RuvB.